Consider the following 118-residue polypeptide: UPF0231 protein PM0457 (118 aa).

This sequence belongs to the UPF0231 family.

The sequence is that of UPF0231 protein PM0457 from Pasteurella multocida (strain Pm70).